Reading from the N-terminus, the 541-residue chain is uncharacterized protein (541 aa).

A signal peptide spans 1–17; it reads MSFSATILFSPPSGSEA. 2 disordered regions span residues 28-47 and 103-138; these read TSQG…TPIT and GKVC…SNSL. The segment covering 103 to 116 has biased composition (basic and acidic residues); that stretch reads GKVCTADEDRESRA. Thr118 carries the post-translational modification Phosphothreonine. Residues Lys128 and Lys223 each participate in a glycyl lysine isopeptide (Lys-Gly) (interchain with G-Cter in SUMO2) cross-link. Ser226 is modified (phosphoserine). The segment covering 232–243 has biased composition (polar residues); that stretch reads AIQRASSETGPE. The disordered stretch occupies residues 232–254; sequence AIQRASSETGPESGTKLPATRPE. A phosphoserine mark is found at Ser286 and Ser429. The disordered stretch occupies residues 494-526; sequence YNPNFQEDEGGGNEKGPVSPSYDQPHKTSCPDL.

It is found in the secreted. This is an uncharacterized protein from Mus musculus (Mouse).